The following is a 377-amino-acid chain: 3-dehydroquinate synthase (377 aa).

NAD(+) contacts are provided by residues 115-119 (GVIGD), 139-140 (TS), Lys152, and Lys161. Zn(2+) is bound by residues Glu194, His256, and His275.

This sequence belongs to the sugar phosphate cyclases superfamily. Dehydroquinate synthase family. The cofactor is NAD(+). Requires Co(2+) as cofactor. Zn(2+) serves as cofactor.

It is found in the cytoplasm. The enzyme catalyses 7-phospho-2-dehydro-3-deoxy-D-arabino-heptonate = 3-dehydroquinate + phosphate. It functions in the pathway metabolic intermediate biosynthesis; chorismate biosynthesis; chorismate from D-erythrose 4-phosphate and phosphoenolpyruvate: step 2/7. Its function is as follows. Catalyzes the conversion of 3-deoxy-D-arabino-heptulosonate 7-phosphate (DAHP) to dehydroquinate (DHQ). In Agrobacterium fabrum (strain C58 / ATCC 33970) (Agrobacterium tumefaciens (strain C58)), this protein is 3-dehydroquinate synthase.